The chain runs to 188 residues: Elongation factor P (188 aa).

The protein belongs to the elongation factor P family.

Its subcellular location is the cytoplasm. It functions in the pathway protein biosynthesis; polypeptide chain elongation. Involved in peptide bond synthesis. Stimulates efficient translation and peptide-bond synthesis on native or reconstituted 70S ribosomes in vitro. Probably functions indirectly by altering the affinity of the ribosome for aminoacyl-tRNA, thus increasing their reactivity as acceptors for peptidyl transferase. This chain is Elongation factor P, found in Stutzerimonas stutzeri (strain A1501) (Pseudomonas stutzeri).